The chain runs to 426 residues: Tryptophan synthase beta chain (426 aa).

The residue at position 108 (Lys-108) is an N6-(pyridoxal phosphate)lysine.

Belongs to the TrpB family. Tetramer of two alpha and two beta chains. Pyridoxal 5'-phosphate serves as cofactor.

It catalyses the reaction (1S,2R)-1-C-(indol-3-yl)glycerol 3-phosphate + L-serine = D-glyceraldehyde 3-phosphate + L-tryptophan + H2O. The protein operates within amino-acid biosynthesis; L-tryptophan biosynthesis; L-tryptophan from chorismate: step 5/5. The beta subunit is responsible for the synthesis of L-tryptophan from indole and L-serine. This chain is Tryptophan synthase beta chain (trpB), found in Thermoplasma volcanium (strain ATCC 51530 / DSM 4299 / JCM 9571 / NBRC 15438 / GSS1).